The sequence spans 372 residues: Glutamate 5-kinase (372 aa).

An ATP-binding site is contributed by Lys-14. Substrate contacts are provided by Ser-54, Asp-141, and Asn-153. 173–174 (TD) contacts ATP. Positions 280–358 (RGTLVLDAGA…DAIESILGYS (79 aa)) constitute a PUA domain.

The protein belongs to the glutamate 5-kinase family.

It is found in the cytoplasm. The catalysed reaction is L-glutamate + ATP = L-glutamyl 5-phosphate + ADP. It participates in amino-acid biosynthesis; L-proline biosynthesis; L-glutamate 5-semialdehyde from L-glutamate: step 1/2. Catalyzes the transfer of a phosphate group to glutamate to form L-glutamate 5-phosphate. This Pseudomonas putida (strain GB-1) protein is Glutamate 5-kinase.